The primary structure comprises 491 residues: CRM-domain containing factor CFM9, mitochondrial (491 aa).

The N-terminal 25 residues, 1 to 25 (MNQVFKGWSRGMSTSRGRSMRSKVE), are a transit peptide targeting the mitochondrion. The segment at 1-34 (MNQVFKGWSRGMSTSRGRSMRSKVESRMRKESGK) is disordered. Residues 22–34 (SKVESRMRKESGK) are compositionally biased toward basic and acidic residues. One can recognise a CRM domain in the interval 90–187 (ELFTSEQVQA…RNYRQPKNLI (98 aa)). Residues 255-265 (PYVFHGDKQSE) are compositionally biased toward basic and acidic residues. Disordered stretches follow at residues 255 to 287 (PYVFHGDKQSERGTSVDNREESEPGDEDSDQEE) and 328 to 491 (RSRT…WDSD). Positions 277–287 (EPGDEDSDQEE) are enriched in acidic residues. Residues 345–359 (RRNDRDTHSQRRPND) show a composition bias toward basic and acidic residues. Positions 360 to 375 (SDDDDDDGELDSEDDE) are enriched in acidic residues. Over residues 392 to 416 (RPREDFKRRSPDPRPRPRAQVRSDD) the composition is skewed to basic and acidic residues. The span at 453 to 478 (TVSASSSKQSRFRNNSSRDGINNSKS) shows a compositional bias: polar residues.

In terms of tissue distribution, highly expressed in roots and meristemic regions of young seedlings. Expressed at low levels in stems, trichomes and stigma.

The protein localises to the mitochondrion. In terms of biological role, involved in the splicing of group II introns in mitochondria. Required for the splicing of mitochondrial introns found in nad1, nad2, nad4, nad5, nad7, rps3 and cox2 genes. Splicing of mitochondrial introns is crucial for mitochondrial biogenesis and function, plant growth and development, and plant response to abiotic stresses. This chain is CRM-domain containing factor CFM9, mitochondrial, found in Arabidopsis thaliana (Mouse-ear cress).